A 371-amino-acid chain; its full sequence is Aminomethyltransferase (371 aa).

This sequence belongs to the GcvT family. The glycine cleavage system is composed of four proteins: P, T, L and H.

The catalysed reaction is N(6)-[(R)-S(8)-aminomethyldihydrolipoyl]-L-lysyl-[protein] + (6S)-5,6,7,8-tetrahydrofolate = N(6)-[(R)-dihydrolipoyl]-L-lysyl-[protein] + (6R)-5,10-methylene-5,6,7,8-tetrahydrofolate + NH4(+). In terms of biological role, the glycine cleavage system catalyzes the degradation of glycine. The protein is Aminomethyltransferase of Cutibacterium acnes (strain DSM 16379 / KPA171202) (Propionibacterium acnes).